A 56-amino-acid chain; its full sequence is PI-stichotoxin-Hcr2o (56 aa).

Residues 4–54 (CLEPKVVGPCKARIRRFYFDSETGKCTPFIYGGCGGNGNNFETLHACRAIC) form the BPTI/Kunitz inhibitor domain. 3 cysteine pairs are disulfide-bonded: cysteine 4/cysteine 54, cysteine 13/cysteine 37, and cysteine 29/cysteine 50.

This sequence belongs to the venom Kunitz-type family. Sea anemone type 2 potassium channel toxin subfamily.

Its subcellular location is the secreted. The protein resides in the nematocyst. Its function is as follows. This recombinant serine protease inhibitor inhibits both trypsin (Ki=21 nM) and chymotrypsin (Ki=500 nM). It possesses anti-inflammatory activity in vitro. It inhibits macrophage LPS-induced nitric oxide synthesis, and blocks histamine influence on intracellular calcium concentration in murine bone marrow-derived macrophages, which can indicate inhibition of H1-histamine receptor (HRH1). In vitro, it shows cytoprotective activity in the oxidative stress agent 6-hydroxydopamine (6-OHDA)-induced neurotoxicity model. In this model, it decreases reactive oxygen species (ROS) levels, and increases cell viability in a correlated manner. It is possible that the observed effect is due to the ability of this peptides to act as free-radical scavenger. In vivo, it shows analgesic activity, since it increases hot plate and tail flick withdrawal latencies, when using a mice thermal pain stimulation model. The chain is PI-stichotoxin-Hcr2o from Radianthus crispa (Leathery sea anemone).